We begin with the raw amino-acid sequence, 304 residues long: Quinolinate synthase (304 aa).

His-24 and Ser-41 together coordinate iminosuccinate. Cys-86 provides a ligand contact to [4Fe-4S] cluster. Residues 112-114 (YVN) and Ser-129 contribute to the iminosuccinate site. Position 171 (Cys-171) interacts with [4Fe-4S] cluster. Iminosuccinate is bound by residues 197-199 (HPE) and Thr-214. [4Fe-4S] cluster is bound at residue Cys-259.

It belongs to the quinolinate synthase family. Type 2 subfamily. The cofactor is [4Fe-4S] cluster.

Its subcellular location is the cytoplasm. The catalysed reaction is iminosuccinate + dihydroxyacetone phosphate = quinolinate + phosphate + 2 H2O + H(+). Its pathway is cofactor biosynthesis; NAD(+) biosynthesis; quinolinate from iminoaspartate: step 1/1. Its function is as follows. Catalyzes the condensation of iminoaspartate with dihydroxyacetone phosphate to form quinolinate. The sequence is that of Quinolinate synthase from Methanosarcina barkeri (strain Fusaro / DSM 804).